Consider the following 306-residue polypeptide: Ribonuclease H2 subunit B (306 aa).

Residues 232-285 (LPDLSSPTPEPPVKKRKVSEAPVEAEEDYTKFNSDSKNKKSNSKMTAAQKSLAK) are disordered. Positions 259–269 (DYTKFNSDSKN) are enriched in basic and acidic residues.

This sequence belongs to the RNase H2 subunit B family. In terms of assembly, the RNase H2 complex is a heterotrimer composed of the catalytic subunit rnaseh2a and the non-catalytic subunits rnaseh2b and rnaseh2c.

The protein localises to the nucleus. Functionally, non catalytic subunit of RNase H2, an endonuclease that specifically degrades the RNA of RNA:DNA hybrids. Participates in DNA replication, possibly by mediating the removal of lagging-strand Okazaki fragment RNA primers during DNA replication. Mediates the excision of single ribonucleotides from DNA:RNA duplexes. The polypeptide is Ribonuclease H2 subunit B (rnaseh2b) (Xenopus tropicalis (Western clawed frog)).